The sequence spans 342 residues: MKVDLFDFELPERLIAQVPLKERDASRLMVLDKQTGGLTDSSFKEIVSFFNEGDCLVLNNTRVLPARLFGTKEDTGAKVELLLLKQEENDTWETLVKPAKRVKKGTVLTFGDGRLTAVCTEELDHGGRKIEFRYDGIFYEVLESLGEMPLPPYIKEQLDDKERYQTVFSKEIGSAAAPTAGLHFTEEILDELKQKGVRIEFITLHVGLGTFRPVSADDVEEHNMHAEFYEMTEETAASLNEVRKAGGRIVSVGTTSTRTLETIAGEHDGEFTASSGWTSIFIYPGYEFKAIDGMITNFHLPKSSLIMLVSALAGREHVLSAYRHAVEEEYRFFSFGDAMLII.

This sequence belongs to the QueA family. In terms of assembly, monomer.

The protein resides in the cytoplasm. It catalyses the reaction 7-aminomethyl-7-carbaguanosine(34) in tRNA + S-adenosyl-L-methionine = epoxyqueuosine(34) in tRNA + adenine + L-methionine + 2 H(+). Its pathway is tRNA modification; tRNA-queuosine biosynthesis. In terms of biological role, transfers and isomerizes the ribose moiety from AdoMet to the 7-aminomethyl group of 7-deazaguanine (preQ1-tRNA) to give epoxyqueuosine (oQ-tRNA). The chain is S-adenosylmethionine:tRNA ribosyltransferase-isomerase from Bacillus velezensis (strain DSM 23117 / BGSC 10A6 / LMG 26770 / FZB42) (Bacillus amyloliquefaciens subsp. plantarum).